A 213-amino-acid polypeptide reads, in one-letter code: Receptor-binding cancer antigen expressed on SiSo cells (213 aa).

Residues 1-6 are Extracellular-facing; that stretch reads MAITQF. A helical; Signal-anchor for type III membrane protein transmembrane segment spans residues 7-27; that stretch reads RLFKFCTCLATVFSFLKRLIC. Residues 28–213 lie on the Cytoplasmic side of the membrane; that stretch reads RSGRGRKLSG…EQNKIGVKLS (186 aa). At Ser36 the chain carries Phosphoserine. The residue at position 41 (Thr41) is a Phosphothreonine. Residue Tyr94 is modified to Phosphotyrosine. The stretch at 163–211 forms a coiled coil; it reads EDAAWQAEEVLRQQKLADREKRAAEQQRKKMEKEAQRLMKKEQNKIGVK. Residues 178–206 show a composition bias toward basic and acidic residues; the sequence is LADREKRAAEQQRKKMEKEAQRLMKKEQN. The tract at residues 178 to 213 is disordered; that stretch reads LADREKRAAEQQRKKMEKEAQRLMKKEQNKIGVKLS.

Homodimer. In terms of tissue distribution, widely expressed. Expressed in ovary, testis, prostate, thymus, muscle and heart, but not in small intestine, colon, lymph nodes, or peripherical blood lymphocytes. The protein is not detected in any of the above organs.

It is found in the golgi apparatus membrane. Its function is as follows. May participate in suppression of cell proliferation and induces apoptotic cell death through activation of interleukin-1-beta converting enzyme (ICE)-like proteases. This Homo sapiens (Human) protein is Receptor-binding cancer antigen expressed on SiSo cells (EBAG9).